We begin with the raw amino-acid sequence, 406 residues long: Tryptophan 2,3-dioxygenase (406 aa).

The residue at position 19 (serine 19) is a Phosphoserine. Substrate contacts are provided by residues 72–76 (FIITH) and arginine 144. Histidine 328 is a binding site for heme. A substrate-binding site is contributed by threonine 342.

This sequence belongs to the tryptophan 2,3-dioxygenase family. Homotetramer. Dimer of dimers. Heme serves as cofactor. As to expression, liver.

The catalysed reaction is L-tryptophan + O2 = N-formyl-L-kynurenine. It functions in the pathway amino-acid degradation; L-tryptophan degradation via kynurenine pathway; L-kynurenine from L-tryptophan: step 1/2. Its function is as follows. Heme-dependent dioxygenase that catalyzes the oxidative cleavage of the L-tryptophan (L-Trp) pyrrole ring and converts L-tryptophan to N-formyl-L-kynurenine. Catalyzes the oxidative cleavage of the indole moiety. The protein is Tryptophan 2,3-dioxygenase of Rattus norvegicus (Rat).